The sequence spans 21 residues: ISAEAPLYAEVGMPALSPTMT.

This sequence belongs to the 2-oxoacid dehydrogenase family. Forms a 60-polypeptide structural core. The cofactor is (R)-lipoate.

It localises to the mitochondrion matrix. The enzyme catalyses N(6)-[(R)-dihydrolipoyl]-L-lysyl-[protein] + acetyl-CoA = N(6)-[(R)-S(8)-acetyldihydrolipoyl]-L-lysyl-[protein] + CoA. Functionally, the pyruvate dehydrogenase complex catalyzes the overall conversion of pyruvate to acetyl-CoA and CO(2). It contains multiple copies of three enzymatic components: pyruvate dehydrogenase (E1), dihydrolipoamide acetyltransferase (E2) and lipoamide dehydrogenase (E3). The protein is 78 kDa dihydrolipoyllysine-residue acetyltransferase component of pyruvate dehydrogenase complex of Solanum tuberosum (Potato).